The following is a 289-amino-acid chain: Phytoene synthase (289 aa).

It belongs to the phytoene/squalene synthase family. The cofactor is ATP. Mn(2+) is required as a cofactor. Requires Mg(2+) as cofactor.

It functions in the pathway carotenoid biosynthesis; phytoene biosynthesis. In terms of biological role, involved in the biosynthesis of carotenoids. Catalyzes the condensation of two molecules of geranylgeranyl diphosphate (GGPP) to give prephytoene diphosphate (PPPP) and the subsequent rearrangement of the cyclopropylcarbinyl intermediate to yield phytoene. The polypeptide is Phytoene synthase (crtB) (Thermus thermophilus (strain ATCC BAA-163 / DSM 7039 / HB27)).